The primary structure comprises 234 residues: Adenosine 5'-phosphosulfate reductase (234 aa).

Positions 120, 121, 203, and 206 each coordinate [4Fe-4S] cluster. The Nucleophile; cysteine thiosulfonate intermediate role is filled by Cys-229.

It belongs to the PAPS reductase family. CysH subfamily. [4Fe-4S] cluster serves as cofactor.

It is found in the cytoplasm. It catalyses the reaction [thioredoxin]-disulfide + sulfite + AMP + 2 H(+) = adenosine 5'-phosphosulfate + [thioredoxin]-dithiol. Its pathway is sulfur metabolism; hydrogen sulfide biosynthesis; sulfite from sulfate. Catalyzes the formation of sulfite from adenosine 5'-phosphosulfate (APS) using thioredoxin as an electron donor. The sequence is that of Adenosine 5'-phosphosulfate reductase from Bacillus cereus (strain AH820).